We begin with the raw amino-acid sequence, 613 residues long: Ribosome-associated molecular chaperone SSB1 (613 aa).

The nucleotide binding domain (NBD) stretch occupies residues 1 to 391 (MAEGVFSGAI…ILTGSNLSDD (391 aa)). Residues 16–18 (TTY), Lys73, 205–207 (GGT), 271–278 (ERAKRTLS), and Gly342 each bind ATP. An inter-domain linker region spans residues 392 to 402 (TKDLLLLDVAP). The tract at residues 403–613 (LSLGVAMQGD…RVVTKAMATR (211 aa)) is substrate binding domain (SBD). The segment at 516–612 (SEDIEKMVSQ…KRVVTKAMAT (97 aa)) is lid domain (SBDalpha). The Nuclear export signal signature appears at 574 to 582 (VEAALADAF).

It belongs to the heat shock protein 70 family. Ssb-type Hsp70 subfamily. As to quaternary structure, binds to ribosomes. Binds close to the ribosomal tunnel exit via contacts with both ribosomal proteins and rRNA. Directly interacts with nascent polypeptides. This interaction is dependent on the ribosome-associated complex (RAC). Interacts with SSE1. Interacts with FES1.

It is found in the cytoplasm. It catalyses the reaction ATP + H2O = ADP + phosphate + H(+). Its function is as follows. Ribosome-bound, Hsp70-type chaperone that assists in the cotranslational folding of newly synthesized proteins in the cytosol. Stimulates folding by interacting with nascent chains, binding to short, largely hydrophobic sequences exposed by unfolded proteins, thereby stabilizing longer, more slowly translated, and aggregation-prone nascent polypeptides and domains that cannot fold stably until fully synthesized. The Hsp70-protein substrate interaction depends on ATP-binding and on allosteric regulation between the NBD and the SBD. The ATP-bound state is characterized by a fast exchange rate of substrate (low affinity state), while in the ADP-bound state exchange is much slower (high affinity state). During the Hsp70 cycle, the chaperone switches between the ATP-bound state (open conformation) and the ADP-bound state (closed conformation) by major conformational rearrangements involving mainly the lid domain. Ssb cooperates with a specific Hsp40/Hsp70 co-chaperone termed the ribosome-associated complex (RAC), which stimulates the ATPase activity of the ribosome-associated pool of Ssbs and switches it to the high affinity substrate binding state. Hsp110 chaperone SSE1 and FES1 act as nucleotide exchange factors that cause substrate release. The protein is Ribosome-associated molecular chaperone SSB1 (SSB1) of Eremothecium gossypii (strain ATCC 10895 / CBS 109.51 / FGSC 9923 / NRRL Y-1056) (Yeast).